The primary structure comprises 704 residues: MADDQERDLQRFLENVDEITSLIQEMNSDDPFIQQKAVLDSEKKLLLMEREQEEDGCRTTLNKTMISPPQTPENADEMSPDAFLASVEKDAKERAKRRRENRVLADALKEKGNEAFVRGDYETAIFFYSEGLGKLKDMKVLYTNRAQAFIKLGDYQKALVDCDWALKCDENCTKAYFHMGKAHVALKNYSKAKECYQKIEEINPKLKAQVKEHLNQVTLREKADLQEKEAQESLDSGKNTAVTTKNLLETLSKPGQTPLFYAGGIEILTEMMADCTERTLFRTYGGFSTISDHEVIRRCLFLTGKDAVEEVLCVSVLKLWQEVCVDNEENQRLLVTHPDMARLLPSFMTSRILVIQQQSLDLLLQLTQTENGRNQVIKHLDMTQLCEALLSFLAFSDKKANTAIGILTDLALEERFQVWFQTNLPDVLPALTGALNREPKITSPSALCQCIALLGNISAEPTARKHMIAHEEFGNACLDLLVKCEEDMDLFREITYTLLGLIMNLCLEITFLSEMWVVKMSRKCLSLLNSKDGGILTRAAGVLSRTLSSSQTIVEEALTAGVVKKMIKFLRMGGQTASRYAIKILAICTNSCHAAREEVVRLDKKFDLLMLLLASEDEILAGNAALCLGNCMEVPSAAPSLLKTDIVRVLLKLAGSDSKETGVQLNAGIALGKLCTAEPRFAAQLRELHGIQVLNSTMKHLNDS.

Position 71 is a phosphothreonine (threonine 71). 3 TPR repeats span residues alanine 105–methionine 138, lysine 139–cysteine 172, and threonine 173–leucine 206.

It is found in the cytoplasm. Functionally, cytoplasmic protein that plays a role in the proper assembly of dynein arm complexes in motile cilia in both respiratory cells and sperm flagella. This is Tetratricopeptide repeat protein 12 (Ttc12) from Mus musculus (Mouse).